The sequence spans 79 residues: Ponericin-W-like 32.1 (79 aa).

The first 23 residues, 1-23 (MKCKKQLLVIFFAYFLVVNESEA), serve as a signal peptide directing secretion. Residues 49-79 (RALMKRDLEDIMDPYQKNLKLDRYLRRLAMD) constitute a propeptide that is removed on maturation.

The protein belongs to the non-disulfide-bridged peptide (NDBP) superfamily. Medium-length antimicrobial peptide (group 3) family. Ponericin-W subfamily. Expressed by the venom gland.

The protein localises to the secreted. The protein resides in the target cell membrane. Its function is as follows. Antimicrobial peptide with potent activity against a range of Gram-positive and Gram-negative bacteria. Has high hemolytic activity against erythrocytes. May act by disrupting the integrity of the bacterial cell membrane. In Lychas mucronatus (Chinese swimming scorpion), this protein is Ponericin-W-like 32.1.